Reading from the N-terminus, the 303-residue chain is Porphobilinogen deaminase (303 aa).

The residue at position 240 (Cys240) is an S-(dipyrrolylmethanemethyl)cysteine.

This sequence belongs to the HMBS family. In terms of assembly, monomer. It depends on dipyrromethane as a cofactor.

It catalyses the reaction 4 porphobilinogen + H2O = hydroxymethylbilane + 4 NH4(+). It participates in porphyrin-containing compound metabolism; protoporphyrin-IX biosynthesis; coproporphyrinogen-III from 5-aminolevulinate: step 2/4. Functionally, tetrapolymerization of the monopyrrole PBG into the hydroxymethylbilane pre-uroporphyrinogen in several discrete steps. This chain is Porphobilinogen deaminase, found in Stenotrophomonas maltophilia (strain R551-3).